Reading from the N-terminus, the 181-residue chain is Putative D-tyrosyl-tRNA(Tyr) deacylase 2 (181 aa).

It belongs to the DTD family. Highly divergent. Homodimer.

The protein localises to the cytoplasm. Functionally, may hydrolyze D-tyrosyl-tRNA(Tyr) into D-tyrosine and free tRNA(Tyr). Could be a defense mechanism against a harmful effect of D-tyrosine. The chain is Putative D-tyrosyl-tRNA(Tyr) deacylase 2 from Leishmania major.